The sequence spans 360 residues: Protein Wnt-2 (360 aa).

The first 25 residues, 1 to 25, serve as a signal peptide directing secretion; that stretch reads MNSPLRGIWLWLPLLLTWLTPEVSS. 11 disulfides stabilise this stretch: cysteine 76–cysteine 87, cysteine 127–cysteine 135, cysteine 137–cysteine 157, cysteine 206–cysteine 220, cysteine 208–cysteine 215, cysteine 278–cysteine 309, cysteine 294–cysteine 304, cysteine 308–cysteine 348, cysteine 324–cysteine 339, cysteine 326–cysteine 336, and cysteine 331–cysteine 332. Serine 212 is lipidated: O-palmitoleoyl serine; by PORCN. Residue asparagine 295 is glycosylated (N-linked (GlcNAc...) asparagine).

It belongs to the Wnt family. In terms of processing, palmitoleoylation is required for efficient binding to frizzled receptors. Depalmitoleoylation leads to Wnt signaling pathway inhibition.

It is found in the secreted. The protein resides in the extracellular space. Its subcellular location is the extracellular matrix. Its function is as follows. Ligand for members of the frizzled family of seven transmembrane receptors. Functions in the canonical Wnt signaling pathway that results in activation of transcription factors of the TCF/LEF family. Functions as a upstream regulator of FGF10 expression. Plays an important role in embryonic lung development. May contribute to embryonic brain development by regulating the proliferation of dopaminergic precursors and neurons. The sequence is that of Protein Wnt-2 (WNT2) from Callithrix jacchus (White-tufted-ear marmoset).